The sequence spans 209 residues: Mei4-dependent protein 1 (209 aa).

Positions 1-22 (MLHATQLCYLLLFCFLPISISS) are cleaved as a signal peptide.

Its subcellular location is the secreted. The chain is Mei4-dependent protein 1 (mde1) from Schizosaccharomyces pombe (strain 972 / ATCC 24843) (Fission yeast).